The chain runs to 417 residues: UPF0597 protein FMG_0209 (417 aa).

This sequence belongs to the UPF0597 family.

In Finegoldia magna (strain ATCC 29328 / DSM 20472 / WAL 2508) (Peptostreptococcus magnus), this protein is UPF0597 protein FMG_0209.